An 83-amino-acid chain; its full sequence is Hepcidin-2 (83 aa).

Positions 1–26 are cleaved as a signal peptide; it reads MALSTRTQAACLLLLLLASLSSTTYL. Residues 27–53 constitute a propeptide that is removed on maturation; that stretch reads QQQMRQTTELQPLHGEESRADIAIPMQ. Cystine bridges form between cysteine 65/cysteine 81, cysteine 68/cysteine 71, cysteine 69/cysteine 77, and cysteine 72/cysteine 80.

Belongs to the hepcidin family. In terms of tissue distribution, highly expressed in the liver and to a much lesser extent in the heart. Also expressed in pancreas.

It localises to the secreted. In terms of biological role, seems to act as a signaling molecule involved in the maintenance of iron homeostasis. The protein is Hepcidin-2 (Hamp2) of Mus musculus (Mouse).